Here is a 597-residue protein sequence, read N- to C-terminus: Elongation factor 4 (597 aa).

The 178-residue stretch at 4 to 181 folds into the tr-type G domain; sequence SKIRNFSIIA…AIVDYVPAPK (178 aa). Residues 16-21 and 128-131 contribute to the GTP site; these read DHGKST and NKID.

The protein belongs to the TRAFAC class translation factor GTPase superfamily. Classic translation factor GTPase family. LepA subfamily.

Its subcellular location is the cell membrane. It catalyses the reaction GTP + H2O = GDP + phosphate + H(+). Required for accurate and efficient protein synthesis under certain stress conditions. May act as a fidelity factor of the translation reaction, by catalyzing a one-codon backward translocation of tRNAs on improperly translocated ribosomes. Back-translocation proceeds from a post-translocation (POST) complex to a pre-translocation (PRE) complex, thus giving elongation factor G a second chance to translocate the tRNAs correctly. Binds to ribosomes in a GTP-dependent manner. In Mycoplasmopsis agalactiae (strain NCTC 10123 / CIP 59.7 / PG2) (Mycoplasma agalactiae), this protein is Elongation factor 4.